The following is a 212-amino-acid chain: Pyridoxine/pyridoxamine 5'-phosphate oxidase (212 aa).

Substrate-binding positions include 8-11 and lysine 66; that span reads RREY. Residues 61-66, 76-77, arginine 82, lysine 83, and glutamine 105 each bind FMN; these read RIVLLK and FT. Substrate is bound by residues tyrosine 123, arginine 127, and serine 131. FMN-binding positions include 140–141 and tryptophan 185; that span reads QS. Residue 191–193 coordinates substrate; that stretch reads RLH. Arginine 195 is a binding site for FMN.

It belongs to the pyridoxamine 5'-phosphate oxidase family. In terms of assembly, homodimer. It depends on FMN as a cofactor.

It carries out the reaction pyridoxamine 5'-phosphate + O2 + H2O = pyridoxal 5'-phosphate + H2O2 + NH4(+). It catalyses the reaction pyridoxine 5'-phosphate + O2 = pyridoxal 5'-phosphate + H2O2. Its pathway is cofactor metabolism; pyridoxal 5'-phosphate salvage; pyridoxal 5'-phosphate from pyridoxamine 5'-phosphate: step 1/1. It participates in cofactor metabolism; pyridoxal 5'-phosphate salvage; pyridoxal 5'-phosphate from pyridoxine 5'-phosphate: step 1/1. Its function is as follows. Catalyzes the oxidation of either pyridoxine 5'-phosphate (PNP) or pyridoxamine 5'-phosphate (PMP) into pyridoxal 5'-phosphate (PLP). In Shewanella baltica (strain OS223), this protein is Pyridoxine/pyridoxamine 5'-phosphate oxidase.